Reading from the N-terminus, the 320-residue chain is Agamous-like MADS-box protein AGL90 (320 aa).

The region spanning 1-59 (MKKVKLSLIANERSRKTSFMKRKNGIFKKLHELSTLCGVQACALIYSPFIPVPESWPSR) is the MADS-box domain. Residues 80–115 (KMMDQETHLMERITKAKEQLKNLAAENRELQVRRFM) are a coiled coil.

Interacts with AGL62.

Its subcellular location is the nucleus. Its function is as follows. Probable transcription factor. The chain is Agamous-like MADS-box protein AGL90 (AGL90) from Arabidopsis thaliana (Mouse-ear cress).